The following is a 179-amino-acid chain: Probable chorismate pyruvate-lyase (179 aa).

The substrate site is built by arginine 82, leucine 120, and glutamate 165.

Belongs to the UbiC family.

The protein resides in the cytoplasm. It catalyses the reaction chorismate = 4-hydroxybenzoate + pyruvate. It functions in the pathway cofactor biosynthesis; ubiquinone biosynthesis. In terms of biological role, removes the pyruvyl group from chorismate, with concomitant aromatization of the ring, to provide 4-hydroxybenzoate (4HB) for the ubiquinone pathway. The polypeptide is Probable chorismate pyruvate-lyase (Vibrio cholerae serotype O1 (strain ATCC 39315 / El Tor Inaba N16961)).